The chain runs to 389 residues: Type II methyltransferase M2.BsuMI (389 aa).

One can recognise an SAM-dependent MTase C5-type domain in the interval 1-299 (MKVVSLFSGI…ENLSQPKGSI (299 aa)). Residue Cys-69 is part of the active site.

Belongs to the class I-like SAM-binding methyltransferase superfamily. C5-methyltransferase family. Monomer. May form a complex with YdiP, also seems to be active alone.

The catalysed reaction is a 2'-deoxycytidine in DNA + S-adenosyl-L-methionine = a 5-methyl-2'-deoxycytidine in DNA + S-adenosyl-L-homocysteine + H(+). Somewhat inhibited by MgCl(2) and spermidine, strongly inhibited by MnCl(2). Its function is as follows. A methylase, recognizes the double-stranded sequence 5'-YTCGAR-3', methylates C-3 on both strands, and protects the DNA from cleavage by the BsuMI endonuclease. The sequence is that of Type II methyltransferase M2.BsuMI (ydiP) from Bacillus subtilis (strain 168).